We begin with the raw amino-acid sequence, 273 residues long: Putative phosphoenolpyruvate synthase regulatory protein (273 aa).

An ADP-binding site is contributed by Gly153–Thr160.

It belongs to the pyruvate, phosphate/water dikinase regulatory protein family. PSRP subfamily.

It catalyses the reaction [pyruvate, water dikinase] + ADP = [pyruvate, water dikinase]-phosphate + AMP + H(+). The enzyme catalyses [pyruvate, water dikinase]-phosphate + phosphate + H(+) = [pyruvate, water dikinase] + diphosphate. Bifunctional serine/threonine kinase and phosphorylase involved in the regulation of the phosphoenolpyruvate synthase (PEPS) by catalyzing its phosphorylation/dephosphorylation. The polypeptide is Putative phosphoenolpyruvate synthase regulatory protein (Sodalis glossinidius (strain morsitans)).